A 176-amino-acid chain; its full sequence is Peptide methionine sulfoxide reductase MsrA (176 aa).

Cysteine 10 is an active-site residue.

The protein belongs to the MsrA Met sulfoxide reductase family.

It carries out the reaction L-methionyl-[protein] + [thioredoxin]-disulfide + H2O = L-methionyl-(S)-S-oxide-[protein] + [thioredoxin]-dithiol. It catalyses the reaction [thioredoxin]-disulfide + L-methionine + H2O = L-methionine (S)-S-oxide + [thioredoxin]-dithiol. Functionally, has an important function as a repair enzyme for proteins that have been inactivated by oxidation. Catalyzes the reversible oxidation-reduction of methionine sulfoxide in proteins to methionine. The chain is Peptide methionine sulfoxide reductase MsrA from Sulfolobus acidocaldarius (strain ATCC 33909 / DSM 639 / JCM 8929 / NBRC 15157 / NCIMB 11770).